The sequence spans 228 residues: Putative N-acetylmannosamine-6-phosphate 2-epimerase (228 aa).

It belongs to the NanE family.

The catalysed reaction is an N-acyl-D-glucosamine 6-phosphate = an N-acyl-D-mannosamine 6-phosphate. It functions in the pathway amino-sugar metabolism; N-acetylneuraminate degradation; D-fructose 6-phosphate from N-acetylneuraminate: step 3/5. Functionally, converts N-acetylmannosamine-6-phosphate (ManNAc-6-P) to N-acetylglucosamine-6-phosphate (GlcNAc-6-P). This is Putative N-acetylmannosamine-6-phosphate 2-epimerase from Thermosynechococcus vestitus (strain NIES-2133 / IAM M-273 / BP-1).